Here is a 122-residue protein sequence, read N- to C-terminus: Large ribosomal subunit protein uL14 (122 aa).

Belongs to the universal ribosomal protein uL14 family. As to quaternary structure, part of the 50S ribosomal subunit. Forms a cluster with proteins L3 and L19. In the 70S ribosome, L14 and L19 interact and together make contacts with the 16S rRNA in bridges B5 and B8.

Its function is as follows. Binds to 23S rRNA. Forms part of two intersubunit bridges in the 70S ribosome. This is Large ribosomal subunit protein uL14 from Campylobacter fetus subsp. fetus (strain 82-40).